Here is a 231-residue protein sequence, read N- to C-terminus: MLVMTEYLLSAGICMAIVSILLIGMAISNVSKGQYAKRFFFFATSCLVLTLVVVSSLSSSANASQTDNGVNRSGSEDPTVYSATSTKKLHKEPATLIKAIDGDTVKLMYKGQPMTFRLLLVDTPETKHPKKGVEKYGPEASAFTKKMVENAKKIEVEFDKGQRTDKYGRGLAYIYADGKMVNEALVRQGLAKVAYVYKPNNTHEQHLRKSEAQAKKEKLNIWSEDNADSGQ.

Positions 1-26 (MLVMTEYLLSAGICMAIVSILLIGMA) are cleaved as a signal peptide. 2 propeptides span residues 27–63 (ISNVSKGQYAKRFFFFATSCLVLTLVVVSSLSSSANA) and 64–82 (SQTDNGVNRSGSEDPTVYS). The span at 61–73 (ANASQTDNGVNRS) shows a compositional bias: polar residues. Residues 61-86 (ANASQTDNGVNRSGSEDPTVYSATST) are disordered. D103 provides a ligand contact to Ca(2+). Residue R117 is part of the active site. Positions 122 and 123 each coordinate Ca(2+). Catalysis depends on residues E125 and R169. The span at 203–219 (HEQHLRKSEAQAKKEKL) shows a compositional bias: basic and acidic residues. A disordered region spans residues 203–231 (HEQHLRKSEAQAKKEKLNIWSEDNADSGQ).

This sequence belongs to the thermonuclease family. Requires Ca(2+) as cofactor.

The protein localises to the secreted. The protein resides in the membrane. It carries out the reaction Endonucleolytic cleavage to nucleoside 3'-phosphates and 3'-phosphooligonucleotide end-products.. Functionally, enzyme that catalyzes the hydrolysis of both DNA and RNA at the 5' position of the phosphodiester bond. The sequence is that of Thermonuclease from Staphylococcus aureus.